The sequence spans 303 residues: Proteasome subunit beta (303 aa).

Positions 1 to 64 (MTWPDRDTSA…VTPSDAVPHG (64 aa)) are cleaved as a propeptide — removed in mature form; by autocatalysis. The Nucleophile role is filled by Thr65.

This sequence belongs to the peptidase T1B family. The 20S proteasome core is composed of 14 alpha and 14 beta subunits that assemble into four stacked heptameric rings, resulting in a barrel-shaped structure. The two inner rings, each composed of seven catalytic beta subunits, are sandwiched by two outer rings, each composed of seven alpha subunits. The catalytic chamber with the active sites is on the inside of the barrel. Has a gated structure, the ends of the cylinder being occluded by the N-termini of the alpha-subunits. Is capped by the proteasome-associated ATPase, ARC.

It is found in the cytoplasm. It catalyses the reaction Cleavage of peptide bonds with very broad specificity.. It functions in the pathway protein degradation; proteasomal Pup-dependent pathway. The formation of the proteasomal ATPase ARC-20S proteasome complex, likely via the docking of the C-termini of ARC into the intersubunit pockets in the alpha-rings, may trigger opening of the gate for substrate entry. Interconversion between the open-gate and close-gate conformations leads to a dynamic regulation of the 20S proteasome proteolysis activity. Component of the proteasome core, a large protease complex with broad specificity involved in protein degradation. The sequence is that of Proteasome subunit beta from Mycolicibacterium gilvum (strain PYR-GCK) (Mycobacterium gilvum (strain PYR-GCK)).